The following is a 151-amino-acid chain: Large ribosomal subunit protein uL15 (151 aa).

Residues 1–60 (MAENNPLKIHNLRPAPGAKTAKTRVGRGEASKGKTAGRGTKGTKARYQVPERFEGGQMPL) are disordered.

Belongs to the universal ribosomal protein uL15 family. As to quaternary structure, part of the 50S ribosomal subunit.

Functionally, binds to the 23S rRNA. The protein is Large ribosomal subunit protein uL15 of Streptomyces coelicolor (strain ATCC BAA-471 / A3(2) / M145).